The sequence spans 317 residues: Lipoyl synthase (317 aa).

Residues Met-1–Pro-28 are disordered. The [4Fe-4S] cluster site is built by Cys-64, Cys-69, Cys-75, Cys-90, Cys-94, Cys-97, and Ser-304. In terms of domain architecture, Radical SAM core spans Phe-76–Arg-293.

The protein belongs to the radical SAM superfamily. Lipoyl synthase family. [4Fe-4S] cluster is required as a cofactor.

It localises to the cytoplasm. The enzyme catalyses [[Fe-S] cluster scaffold protein carrying a second [4Fe-4S](2+) cluster] + N(6)-octanoyl-L-lysyl-[protein] + 2 oxidized [2Fe-2S]-[ferredoxin] + 2 S-adenosyl-L-methionine + 4 H(+) = [[Fe-S] cluster scaffold protein] + N(6)-[(R)-dihydrolipoyl]-L-lysyl-[protein] + 4 Fe(3+) + 2 hydrogen sulfide + 2 5'-deoxyadenosine + 2 L-methionine + 2 reduced [2Fe-2S]-[ferredoxin]. Its pathway is protein modification; protein lipoylation via endogenous pathway; protein N(6)-(lipoyl)lysine from octanoyl-[acyl-carrier-protein]: step 2/2. In terms of biological role, catalyzes the radical-mediated insertion of two sulfur atoms into the C-6 and C-8 positions of the octanoyl moiety bound to the lipoyl domains of lipoate-dependent enzymes, thereby converting the octanoylated domains into lipoylated derivatives. This Acidithiobacillus ferrooxidans (strain ATCC 23270 / DSM 14882 / CIP 104768 / NCIMB 8455) (Ferrobacillus ferrooxidans (strain ATCC 23270)) protein is Lipoyl synthase.